We begin with the raw amino-acid sequence, 139 residues long: Large ribosomal subunit protein uL16 (139 aa).

The span at 1–17 shows a compositional bias: basic residues; that stretch reads MLIPRRTKHRKQHHPRR. Positions 1–24 are disordered; sequence MLIPRRTKHRKQHHPRRTGAASGG.

The protein belongs to the universal ribosomal protein uL16 family. As to quaternary structure, part of the 50S ribosomal subunit.

Binds 23S rRNA and is also seen to make contacts with the A and possibly P site tRNAs. This Beutenbergia cavernae (strain ATCC BAA-8 / DSM 12333 / CCUG 43141 / JCM 11478 / NBRC 16432 / NCIMB 13614 / HKI 0122) protein is Large ribosomal subunit protein uL16.